We begin with the raw amino-acid sequence, 362 residues long: Phospho-N-acetylmuramoyl-pentapeptide-transferase (362 aa).

10 consecutive transmembrane segments (helical) span residues 18 to 38 (VFGYITLRTVLAALTALAISL), 73 to 93 (TMGGALILIAIGITILLWGDL), 97 to 117 (YVWVTLLVTLGFGAVGWVDDW), 134 to 154 (YFWTSAIALGASIFLGLSATT), 160 to 180 (LIVPFFKAVAYPLGVYGFIAL), 200 to 220 (GLAIMPTVMVAGALAIFAYVA), 237 to 257 (AGELAVFCGAICGAGLGFLWF), 264 to 284 (VFMGDVGALALGAALGTIAVV), 289 to 309 (IVLFIMGGLFVAETLSVMVQV), and 339 to 359 (QVVVRFWIITLMLVLFGLSTL).

This sequence belongs to the glycosyltransferase 4 family. MraY subfamily. Requires Mg(2+) as cofactor.

It is found in the cell inner membrane. It catalyses the reaction UDP-N-acetyl-alpha-D-muramoyl-L-alanyl-gamma-D-glutamyl-meso-2,6-diaminopimeloyl-D-alanyl-D-alanine + di-trans,octa-cis-undecaprenyl phosphate = di-trans,octa-cis-undecaprenyl diphospho-N-acetyl-alpha-D-muramoyl-L-alanyl-D-glutamyl-meso-2,6-diaminopimeloyl-D-alanyl-D-alanine + UMP. It participates in cell wall biogenesis; peptidoglycan biosynthesis. Functionally, catalyzes the initial step of the lipid cycle reactions in the biosynthesis of the cell wall peptidoglycan: transfers peptidoglycan precursor phospho-MurNAc-pentapeptide from UDP-MurNAc-pentapeptide onto the lipid carrier undecaprenyl phosphate, yielding undecaprenyl-pyrophosphoryl-MurNAc-pentapeptide, known as lipid I. The protein is Phospho-N-acetylmuramoyl-pentapeptide-transferase of Azoarcus sp. (strain BH72).